The following is a 333-amino-acid chain: Coiled-coil domain-containing protein 68 (333 aa).

2 coiled-coil regions span residues 86 to 120 (LDLLMENMRRKDQQLLEMNRENEVLQIKLEASREA) and 160 to 302 (EKEQ…HWTE).

As to quaternary structure, interacts with CEP170.

It is found in the cytoplasm. The protein resides in the cytoskeleton. Its subcellular location is the microtubule organizing center. The protein localises to the centrosome. It localises to the centriole. Centriolar protein required for centriole subdistal appendage assembly and microtubule anchoring in interphase cells. Together with CCDC120, cooperate with subdistal appendage components ODF2, NIN and CEP170 for hierarchical subdistal appendage assembly. The protein is Coiled-coil domain-containing protein 68 (Ccdc68) of Mus musculus (Mouse).